Reading from the N-terminus, the 300-residue chain is Phosphatidylserine decarboxylase proenzyme (300 aa).

Residues Asp-117, His-173, and Ser-260 each act as charge relay system; for autoendoproteolytic cleavage activity in the active site. Ser-260 functions as the Schiff-base intermediate with substrate; via pyruvic acid; for decarboxylase activity in the catalytic mechanism. At Ser-260 the chain carries Pyruvic acid (Ser); by autocatalysis.

This sequence belongs to the phosphatidylserine decarboxylase family. PSD-B subfamily. Prokaryotic type II sub-subfamily. As to quaternary structure, heterodimer of a large membrane-associated beta subunit and a small pyruvoyl-containing alpha subunit. The cofactor is pyruvate. In terms of processing, is synthesized initially as an inactive proenzyme. Formation of the active enzyme involves a self-maturation process in which the active site pyruvoyl group is generated from an internal serine residue via an autocatalytic post-translational modification. Two non-identical subunits are generated from the proenzyme in this reaction, and the pyruvate is formed at the N-terminus of the alpha chain, which is derived from the carboxyl end of the proenzyme. The autoendoproteolytic cleavage occurs by a canonical serine protease mechanism, in which the side chain hydroxyl group of the serine supplies its oxygen atom to form the C-terminus of the beta chain, while the remainder of the serine residue undergoes an oxidative deamination to produce ammonia and the pyruvoyl prosthetic group on the alpha chain. During this reaction, the Ser that is part of the protease active site of the proenzyme becomes the pyruvoyl prosthetic group, which constitutes an essential element of the active site of the mature decarboxylase.

Its subcellular location is the cell membrane. It catalyses the reaction a 1,2-diacyl-sn-glycero-3-phospho-L-serine + H(+) = a 1,2-diacyl-sn-glycero-3-phosphoethanolamine + CO2. Its pathway is phospholipid metabolism; phosphatidylethanolamine biosynthesis; phosphatidylethanolamine from CDP-diacylglycerol: step 2/2. Its function is as follows. Catalyzes the formation of phosphatidylethanolamine (PtdEtn) from phosphatidylserine (PtdSer). The chain is Phosphatidylserine decarboxylase proenzyme from Fusobacterium nucleatum subsp. nucleatum (strain ATCC 25586 / DSM 15643 / BCRC 10681 / CIP 101130 / JCM 8532 / KCTC 2640 / LMG 13131 / VPI 4355).